The following is a 214-amino-acid chain: Protein DEHYDRATION-INDUCED 19 homolog 5 (214 aa).

Residue S110 is modified to Phosphoserine. The disordered stretch occupies residues 148–185; the sequence is PKKSKLVQPDSSSEASMEDNSLIRDSTEKDWESPSPLS. Residues 156 to 166 are compositionally biased toward polar residues; it reads PDSSSEASMED. A compositionally biased stretch (basic and acidic residues) spans 168–179; it reads SLIRDSTEKDWE.

The protein belongs to the Di19 family. In terms of processing, phosphorylated in vitro by CPK3 or CPK11. As to expression, expressed in seedlings, roots, leaves, stems, flowers and siliques.

Its subcellular location is the nucleus. This Arabidopsis thaliana (Mouse-ear cress) protein is Protein DEHYDRATION-INDUCED 19 homolog 5 (DI19-5).